Reading from the N-terminus, the 166-residue chain is NADH-quinone oxidoreductase subunit C (166 aa).

It belongs to the complex I 30 kDa subunit family. NDH-1 is composed of 14 different subunits. Subunits NuoB, C, D, E, F, and G constitute the peripheral sector of the complex.

It is found in the cell inner membrane. The catalysed reaction is a quinone + NADH + 5 H(+)(in) = a quinol + NAD(+) + 4 H(+)(out). Its function is as follows. NDH-1 shuttles electrons from NADH, via FMN and iron-sulfur (Fe-S) centers, to quinones in the respiratory chain. The immediate electron acceptor for the enzyme in this species is believed to be a menaquinone. Couples the redox reaction to proton translocation (for every two electrons transferred, four hydrogen ions are translocated across the cytoplasmic membrane), and thus conserves the redox energy in a proton gradient. This chain is NADH-quinone oxidoreductase subunit C, found in Chlorobium phaeobacteroides (strain DSM 266 / SMG 266 / 2430).